The chain runs to 57 residues: Large ribosomal subunit protein bL32 (57 aa).

Basic residues predominate over residues 1–20 (MAVPKKKTSKGKRNQRHAVW). The disordered stretch occupies residues 1-23 (MAVPKKKTSKGKRNQRHAVWKAK).

Belongs to the bacterial ribosomal protein bL32 family.

In Prochlorococcus marinus (strain SARG / CCMP1375 / SS120), this protein is Large ribosomal subunit protein bL32.